The following is a 586-amino-acid chain: Adenine deaminase (586 aa).

The protein belongs to the metallo-dependent hydrolases superfamily. Adenine deaminase family. The cofactor is Mn(2+).

It catalyses the reaction adenine + H2O + H(+) = hypoxanthine + NH4(+). This chain is Adenine deaminase, found in Bdellovibrio bacteriovorus (strain ATCC 15356 / DSM 50701 / NCIMB 9529 / HD100).